The sequence spans 426 residues: Serine--tRNA ligase (426 aa).

233 to 235 contacts L-serine; it reads TAE. Residue 264–266 participates in ATP binding; it reads RSE. Glu287 contacts L-serine. 351–354 provides a ligand contact to ATP; that stretch reads EISS. Residue Ser387 participates in L-serine binding.

The protein belongs to the class-II aminoacyl-tRNA synthetase family. Type-1 seryl-tRNA synthetase subfamily. In terms of assembly, homodimer. The tRNA molecule binds across the dimer.

It is found in the cytoplasm. The enzyme catalyses tRNA(Ser) + L-serine + ATP = L-seryl-tRNA(Ser) + AMP + diphosphate + H(+). It catalyses the reaction tRNA(Sec) + L-serine + ATP = L-seryl-tRNA(Sec) + AMP + diphosphate + H(+). The protein operates within aminoacyl-tRNA biosynthesis; selenocysteinyl-tRNA(Sec) biosynthesis; L-seryl-tRNA(Sec) from L-serine and tRNA(Sec): step 1/1. In terms of biological role, catalyzes the attachment of serine to tRNA(Ser). Is also able to aminoacylate tRNA(Sec) with serine, to form the misacylated tRNA L-seryl-tRNA(Sec), which will be further converted into selenocysteinyl-tRNA(Sec). The protein is Serine--tRNA ligase of Pseudomonas paraeruginosa (strain DSM 24068 / PA7) (Pseudomonas aeruginosa (strain PA7)).